The following is a 1049-amino-acid chain: FERM, ARHGEF and pleckstrin domain-containing protein 1 (1049 aa).

Residues 1–37 form a disordered region; that stretch reads MGEIEQKPTPASRLGAPENSGISTLERGQKPPPTPSG. A phosphoserine mark is found at Ser-20 and Ser-23. A Phosphothreonine modification is found at Thr-24. Positions 40-320 constitute an FERM domain; the sequence is MTVKIQMLDD…EHHAFFRLFE (281 aa). Phosphoserine is present on residues Ser-340, Ser-373, Ser-389, Ser-403, Ser-427, Ser-433, and Ser-437. Residues 361–537 are disordered; that stretch reads FERKHSKIHS…TDDEEEGRRK (177 aa). 2 stretches are compositionally biased toward polar residues: residues 371-395 and 402-412; these read TRSLVSQPTAPNSEVPKQSPQSASL and ESPSAQSCQQA. Residues 435–448 show a composition bias toward low complexity; it reads SGSKAADGTAAAAP. Polar residues-rich tracts occupy residues 473–492 and 499–514; these read STGSLTGSPHLSELSINSQG and VTLSPNLSPDNKQASP. Phosphoserine occurs at positions 513 and 517. In terms of domain architecture, DH spans 543 to 734; it reads KAYYIAKEVS…TEMVAQLHGT (192 aa). In terms of domain architecture, PH 1 spans 763 to 860; sequence EFIRLGSLSK…WLEDIQMAID (98 aa). Phosphoserine occurs at positions 837, 876, and 882. A disordered region spans residues 866–908; it reads NGPTPELLASSPPDNKSPDEATAADQESEDDLSASRTSLERQA. Thr-887 carries the post-translational modification Phosphothreonine. Ser-893, Ser-900, and Ser-903 each carry phosphoserine. The PH 2 domain occupies 936–1033; sequence ENQLSGNLLR…WMEVIRSATS (98 aa).

As to quaternary structure, interacts with CADM1. Interacts with RAC1. Detected in forbrain (at protein level).

The protein resides in the cell membrane. It is found in the synapse. The protein localises to the synaptosome. It localises to the cytoplasm. Its subcellular location is the cytosol. The protein resides in the cell projection. It is found in the filopodium. The protein localises to the dendrite. It localises to the dendritic spine. Functionally, may play a role in semaphorin signaling. Functions as a guanine nucleotide exchange factor for RAC1. Plays a role in the assembly and disassembly of dendritic filopodia, the formation of dendritic spines, regulation of dendrite length and ultimately the formation of synapses. This is FERM, ARHGEF and pleckstrin domain-containing protein 1 (Farp1) from Rattus norvegicus (Rat).